Consider the following 490-residue polypeptide: Betaine aldehyde dehydrogenase (490 aa).

Thr-26, Ile-27, and Asp-93 together coordinate K(+). NAD(+) is bound at residue 150-152 (GAW). Catalysis depends on Lys-162, which acts as the Charge relay system. 176 to 179 (KPSE) is a binding site for NAD(+). Val-180 contacts K(+). 230-233 (GVAS) contacts NAD(+). Leu-246 contacts K(+). Glu-252 serves as the catalytic Proton acceptor. Residues Gly-254, Cys-286, and Glu-387 each contribute to the NAD(+) site. The active-site Nucleophile is the Cys-286. Cys-286 is subject to Cysteine sulfenic acid (-SOH). Residues Lys-457 and Gly-460 each contribute to the K(+) site. Glu-464 functions as the Charge relay system in the catalytic mechanism.

Belongs to the aldehyde dehydrogenase family. As to quaternary structure, dimer of dimers. K(+) is required as a cofactor.

The catalysed reaction is betaine aldehyde + NAD(+) + H2O = glycine betaine + NADH + 2 H(+). Its pathway is amine and polyamine biosynthesis; betaine biosynthesis via choline pathway; betaine from betaine aldehyde: step 1/1. Functionally, involved in the biosynthesis of the osmoprotectant glycine betaine. Catalyzes the irreversible oxidation of betaine aldehyde to the corresponding acid. In Escherichia coli O6:K15:H31 (strain 536 / UPEC), this protein is Betaine aldehyde dehydrogenase.